The following is a 441-amino-acid chain: MDSTKLSELKVFIDQCKSDPSLLTTPSLSFFRDYLESLGAKIPTGVHEEDKDTKPRSFVVEESDDDMDETEEVKPKVEEEEEEDEIVESDVELEGDTVEPDNDPPQKMGDSSVEVTDENREAAQEAKGKAMEALSEGNFDEAIEHLTRAITLNPTSAIMYGNRASVYIKLKKPNAAIRDANAALEINPDSAKGYKSRGMARAMLGEWAEAAKDLHLASTIDYDEEISAVLKKVEPNAHKLEEHRRKYDRLRKEREDKKAERDRLRRRAEAQAAYDKAKKEEQSSSSRPSGGGFPGGMPGGFPGGMPGGFPGGMGGMPGGFPGGMGGMGGMPGGFPGGMGGGMPAGMGGGMPGMGGGMPAGMGGGGMPGAGGGMPGGGGMPGGMDFSKILNDPELMTAFSDPEVMAALQDVMKNPANLAKHQANPKVAPVIAKMMGKFAGPQ.

Residues 41–114 (KIPTGVHEED…PQKMGDSSVE (74 aa)) are disordered. Over residues 46–55 (VHEEDKDTKP) the composition is skewed to basic and acidic residues. Composition is skewed to acidic residues over residues 61-71 (EESDDDMDETE) and 78-102 (EEEEEEDEIVESDVELEGDTVEPDN). Residues serine 63 and serine 89 each carry the phosphoserine modification. TPR repeat units follow at residues 121 to 156 (EAAQEAKGKAMEALSEGNFDEAIEHLTRAITLNPTS), 158 to 190 (IMYGNRASVYIKLKKPNAAIRDANAALEINPDS), and 191 to 224 (AKGYKSRGMARAMLGEWAEAAKDLHLASTIDYDE). The stretch at 236–285 (NAHKLEEHRRKYDRLRKEREDKKAERDRLRRRAEAQAAYDKAKKEEQSSS) forms a coiled coil. Basic and acidic residues predominate over residues 244 to 282 (RRKYDRLRKEREDKKAERDRLRRRAEAQAAYDKAKKEEQ). The disordered stretch occupies residues 244–314 (RRKYDRLRKE…MPGGFPGGMG (71 aa)). Positions 289–314 (SGGGFPGGMPGGFPGGMPGGFPGGMG) are enriched in gly residues. Residues 391–430 (DPELMTAFSDPEVMAALQDVMKNPANLAKHQANPKVAPVI) form the STI1 domain.

Belongs to the FAM10 family.

The chain is FAM10 family protein At4g22670 from Arabidopsis thaliana (Mouse-ear cress).